A 178-amino-acid chain; its full sequence is ATP synthase subunit delta (178 aa).

Belongs to the ATPase delta chain family. As to quaternary structure, F-type ATPases have 2 components, F(1) - the catalytic core - and F(0) - the membrane proton channel. F(1) has five subunits: alpha(3), beta(3), gamma(1), delta(1), epsilon(1). F(0) has three main subunits: a(1), b(2) and c(10-14). The alpha and beta chains form an alternating ring which encloses part of the gamma chain. F(1) is attached to F(0) by a central stalk formed by the gamma and epsilon chains, while a peripheral stalk is formed by the delta and b chains.

The protein localises to the cell membrane. F(1)F(0) ATP synthase produces ATP from ADP in the presence of a proton or sodium gradient. F-type ATPases consist of two structural domains, F(1) containing the extramembraneous catalytic core and F(0) containing the membrane proton channel, linked together by a central stalk and a peripheral stalk. During catalysis, ATP synthesis in the catalytic domain of F(1) is coupled via a rotary mechanism of the central stalk subunits to proton translocation. Functionally, this protein is part of the stalk that links CF(0) to CF(1). It either transmits conformational changes from CF(0) to CF(1) or is implicated in proton conduction. The chain is ATP synthase subunit delta from Acetivibrio thermocellus (strain ATCC 27405 / DSM 1237 / JCM 9322 / NBRC 103400 / NCIMB 10682 / NRRL B-4536 / VPI 7372) (Clostridium thermocellum).